Reading from the N-terminus, the 873-residue chain is Tetratricopeptide repeat protein 16 (873 aa).

The disordered stretch occupies residues 1-20; the sequence is MTDSDEDALKVDQGPSRDIP. TPR repeat units follow at residues 61-94, 96-128, 136-169, 251-284, 285-318, 331-364, 365-398, and 406-439; these read VREYYSRGQQCLEQADWETAVLLFSRALHLDPQL, DFYALRAEAYLQLCDFSSAAQNLRRAYSLQQDN, TFVLYLQGQCLFEQCAFLDALNVFSHAAELQPEK, AQQARQDAGILAVQGKLQHALQRINRAIENNPLD, PSLFLFRGTMYRRLQEFDGAVEDFLKVLDMVTED, LLTYNDFAVHCYRQGAYQEGVLLLNKALRDEQQE, KGLYINRGDCFFQLGNLAFAEADYQQALALSPQD, and GLLQEKMGFCEQRRKQFQKAENHFSTAIRHNPQK. Disordered regions lie at residues 553-626 and 639-873; these read EELK…TSET and SATA…YEAV. Residues 571–582 show a composition bias toward acidic residues; sequence GEAEAPEEEEEK. A compositionally biased stretch (basic and acidic residues) spans 583–593; that stretch reads EKEKKEEKKSE. Composition is skewed to polar residues over residues 600-626, 639-663, and 675-693; these read ASLSDSYLDQTSSASSMSFRTTGTSET, SATAVTFSDSSLLKTQSSDSGNNRE, and TQGQRQSLSKTEPTQSQRR. Basic residues predominate over residues 694-708; the sequence is NSSKTKATIHKRNSS. Residues 709–750 are compositionally biased toward polar residues; sequence KTKATQSQRRNSSKTRATQGQGQSSSKTEATQGQRQSSSEIE. Residues 763–784 are compositionally biased toward basic residues; it reads KTTRSPRQRPRKVKAARGRSWR. 2 stretches are compositionally biased toward polar residues: residues 800 to 828 and 836 to 860; these read RSSTKTEAFYDSNWSLSKTEYAQGQGQRS and GKSQGMSSTSSKAESTWGPSPSLSK.

The sequence is that of Tetratricopeptide repeat protein 16 (TTC16) from Homo sapiens (Human).